The sequence spans 594 residues: UvrABC system protein C (594 aa).

The 87-residue stretch at 13–99 folds into the GIY-YIG domain; that stretch reads NSSGVYQYFD…IKQLKPKYNI (87 aa). Residues 205–240 enclose the UVR domain; it reads DRLIKELELKMERLSSNLRFEEALIYRDRIAKIQKI.

The protein belongs to the UvrC family. Interacts with UvrB in an incision complex.

It localises to the cytoplasm. Its function is as follows. The UvrABC repair system catalyzes the recognition and processing of DNA lesions. UvrC both incises the 5' and 3' sides of the lesion. The N-terminal half is responsible for the 3' incision and the C-terminal half is responsible for the 5' incision. The sequence is that of UvrABC system protein C from Helicobacter pylori (strain G27).